The primary structure comprises 351 residues: Transcription factor bHLH93 (351 aa).

The region spanning 174–223 is the bHLH domain; it reads GQPSKNLMAERRRRKRLNDRLSMLRSIVPKISKMDRTSILGDAIDYMKEL.

Homodimer. Interacts with FAMA. Broadly expressed.

Its subcellular location is the nucleus. Its function is as follows. Transcription factor. May be involved in the differentiation of stomatal guard cells. This Arabidopsis thaliana (Mouse-ear cress) protein is Transcription factor bHLH93 (BHLH93).